Reading from the N-terminus, the 188-residue chain is MAERANDIRPGQVLEHNGGLFSVISIMHTQPGKGGAYIQAEMKNIQTGAKYYERFRSDATIRRAILDEEEYVYLFTEGNIVNLMHPSSYEQIVINLDLLGEKKAYLQDNMKIKVVTYQDKIISAHVPDHVTLTVKETESVIKGQTVTASYKPAILENGIRVNVPQFIKEGDKIVLHTPDNSYYERVKE.

The protein belongs to the elongation factor P family.

Its subcellular location is the cytoplasm. It functions in the pathway protein biosynthesis; polypeptide chain elongation. Involved in peptide bond synthesis. Stimulates efficient translation and peptide-bond synthesis on native or reconstituted 70S ribosomes in vitro. Probably functions indirectly by altering the affinity of the ribosome for aminoacyl-tRNA, thus increasing their reactivity as acceptors for peptidyl transferase. In Wolbachia pipientis subsp. Culex pipiens (strain wPip), this protein is Elongation factor P.